A 421-amino-acid chain; its full sequence is Proton extrusion protein PxcA (421 aa).

Residues 124–153 (PTVHSSNPDDSQLMTSKNNSKPVPDPESDD) form a disordered region. Residues 125-144 (TVHSSNPDDSQLMTSKNNSK) show a composition bias toward polar residues. The next 4 membrane-spanning stretches (helical) occupy residues 203 to 223 (FVLLLVLVPLLTQQISKSFIV), 298 to 318 (AIKNIFADLISAAAFAILLIS), 345 to 365 (IIILFTDIFVGFHSPHGWEVI), and 381 to 401 (FIFLFIATFPVILDTIFKYWI).

The protein belongs to the CemA family.

It is found in the cell inner membrane. Required for H(+) efflux immediately after light irradiation to form a rapid H(+) concentration gradient across the thylakoid membranes. Together with PxcL, contributes to transient H(+) uptake following dark to light transition. This chain is Proton extrusion protein PxcA, found in Synechococcus sp. (strain ATCC 27144 / PCC 6301 / SAUG 1402/1) (Anacystis nidulans).